The primary structure comprises 275 residues: MAIVKVKPTSPGRRAMVKVVNKNLHQGKPFAALLDSQSSTAGRNNNGRITTRHKGGGHKQHYRIVDFRRTKDGIPAKVERLEYDPNRSANIALVLYADGERRYIIAPKGLTVGQQLMSGSEAPIRAGNTLPIRNIPVGTTIHCIEMLPGKGAQMARSAGTSAMLLAREGVYAQVRLRSGEIRRVHIECRATVGEVGNEEHSLRQIGKAGANRWRGIRPTVRGVAMNPVDHPHGGGEGKTAAGRDPVSPWGTPAKGYRTRSNKRTTTMIVQRRHKR.

Positions 35-49 are enriched in polar residues; sequence DSQSSTAGRNNNGRI. Disordered stretches follow at residues 35 to 59 and 224 to 275; these read DSQS…GGHK and AMNP…RHKR. Over residues 50–59 the composition is skewed to basic residues; it reads TTRHKGGGHK.

Belongs to the universal ribosomal protein uL2 family. As to quaternary structure, part of the 50S ribosomal subunit. Forms a bridge to the 30S subunit in the 70S ribosome.

Its function is as follows. One of the primary rRNA binding proteins. Required for association of the 30S and 50S subunits to form the 70S ribosome, for tRNA binding and peptide bond formation. It has been suggested to have peptidyltransferase activity; this is somewhat controversial. Makes several contacts with the 16S rRNA in the 70S ribosome. The protein is Large ribosomal subunit protein uL2 of Burkholderia cenocepacia (strain HI2424).